Consider the following 123-residue polypeptide: Holo-[acyl-carrier-protein] synthase (123 aa).

Asp8 and Glu56 together coordinate Mg(2+).

Belongs to the P-Pant transferase superfamily. AcpS family. Mg(2+) serves as cofactor.

The protein localises to the cytoplasm. The catalysed reaction is apo-[ACP] + CoA = holo-[ACP] + adenosine 3',5'-bisphosphate + H(+). Functionally, transfers the 4'-phosphopantetheine moiety from coenzyme A to a Ser of acyl-carrier-protein. The protein is Holo-[acyl-carrier-protein] synthase of Clostridium botulinum (strain Eklund 17B / Type B).